The chain runs to 394 residues: Elongation factor Tu (394 aa).

Residues 10 to 204 (KPHVNVGTIG…YLDSYIPEPE (195 aa)) form the tr-type G domain. Residues 19–26 (GHVDHGKT) form a G1 region. 19 to 26 (GHVDHGKT) provides a ligand contact to GTP. Threonine 26 lines the Mg(2+) pocket. Residues 60–64 (GITIN) form a G2 region. Positions 81 to 84 (DCPG) are G3. GTP is bound by residues 81–85 (DCPGH) and 136–139 (NKCD). A G4 region spans residues 136–139 (NKCD). The segment at 174-176 (SAL) is G5.

The protein belongs to the TRAFAC class translation factor GTPase superfamily. Classic translation factor GTPase family. EF-Tu/EF-1A subfamily. In terms of assembly, monomer.

It is found in the cytoplasm. It carries out the reaction GTP + H2O = GDP + phosphate + H(+). GTP hydrolase that promotes the GTP-dependent binding of aminoacyl-tRNA to the A-site of ribosomes during protein biosynthesis. The polypeptide is Elongation factor Tu (Pectobacterium atrosepticum (strain SCRI 1043 / ATCC BAA-672) (Erwinia carotovora subsp. atroseptica)).